The sequence spans 813 residues: Receptor-like protein 48 (813 aa).

The first 30 residues, M1 to A30, serve as a signal peptide directing secretion. Topologically, residues K31–Q786 are extracellular. 3 N-linked (GlcNAc...) asparagine glycosylation sites follow: N69, N105, and N123. 3 LRR repeats span residues L111–N134, K136–L159, and S160–N182. N-linked (GlcNAc...) asparagine glycans are attached at residues N195 and N216. LRR repeat units follow at residues L196–S219, L220–I244, P245–S260, H261–L285, L288–H310, L311–H335, L336–S359, T361–Q381, T382–L405, P406–F432, A434–L450, V451–N473, K475–E498, L500–C521, D523–S544, L545–F571, P572–G595, F642–L666, K667–L690, S691–L714, and F716–S739. N248 and N257 each carry an N-linked (GlcNAc...) asparagine glycan. N380 is a glycosylation site (N-linked (GlcNAc...) asparagine). An N-linked (GlcNAc...) asparagine glycan is attached at N484. N673 and N689 each carry an N-linked (GlcNAc...) asparagine glycan. N-linked (GlcNAc...) asparagine glycosylation is found at N721 and N741. A disordered region spans residues F756 to N785. Residues E763 to K781 show a composition bias toward acidic residues. The helical transmembrane segment at V787–I807 threads the bilayer. Residues A808 to S813 lie on the Cytoplasmic side of the membrane.

It belongs to the RLP family.

The protein localises to the cell membrane. Its function is as follows. Plays a role in root hair development. The chain is Receptor-like protein 48 from Arabidopsis thaliana (Mouse-ear cress).